The sequence spans 510 residues: Putative folylpolyglutamate synthase (510 aa).

An ATP-binding site is contributed by 98–101 (GKGS). Ser122, Glu189, and His217 together coordinate Mg(2+). ATP-binding residues include Arg342 and Asp357.

This sequence belongs to the folylpolyglutamate synthase family. A monovalent cation serves as cofactor.

It is found in the mitochondrion inner membrane. The protein resides in the mitochondrion matrix. The protein localises to the cytoplasm. The catalysed reaction is (6S)-5,6,7,8-tetrahydrofolyl-(gamma-L-Glu)(n) + L-glutamate + ATP = (6S)-5,6,7,8-tetrahydrofolyl-(gamma-L-Glu)(n+1) + ADP + phosphate + H(+). The protein operates within cofactor biosynthesis; tetrahydrofolylpolyglutamate biosynthesis. In terms of biological role, catalyzes conversion of folates to polyglutamate derivatives allowing concentration of folate compounds in the cell and the intracellular retention of these cofactors, which are important substrates for most of the folate-dependent enzymes that are involved in one-carbon transfer reactions involved in purine, pyrimidine and amino acid synthesis. The chain is Putative folylpolyglutamate synthase from Caenorhabditis elegans.